The chain runs to 68 residues: uncharacterized protein (68 aa).

Residues methionine 1 to lysine 42 are disordered.

This is an uncharacterized protein from Saccharomyces cerevisiae (strain ATCC 204508 / S288c) (Baker's yeast).